Consider the following 75-residue polypeptide: Protein Tlp homolog (75 aa).

Positions 53–75 (REALDGMREEIKDEARDKKNGYM) are disordered.

This sequence belongs to the Tlp family.

The chain is Protein Tlp homolog from Clostridium botulinum (strain Langeland / NCTC 10281 / Type F).